Reading from the N-terminus, the 471-residue chain is Glutamate--tRNA ligase (471 aa).

The 'HIGH' region motif lies at 9–19 (PSPTGYLHVGG). Residues Cys98, Cys100, Cys125, and Asp127 each coordinate Zn(2+). The 'KMSKS' region motif lies at 237–241 (KLSKR). ATP is bound at residue Lys240.

The protein belongs to the class-I aminoacyl-tRNA synthetase family. Glutamate--tRNA ligase type 1 subfamily. In terms of assembly, monomer. The cofactor is Zn(2+).

It is found in the cytoplasm. The catalysed reaction is tRNA(Glu) + L-glutamate + ATP = L-glutamyl-tRNA(Glu) + AMP + diphosphate. Its function is as follows. Catalyzes the attachment of glutamate to tRNA(Glu) in a two-step reaction: glutamate is first activated by ATP to form Glu-AMP and then transferred to the acceptor end of tRNA(Glu). This is Glutamate--tRNA ligase from Yersinia pestis.